Reading from the N-terminus, the 417-residue chain is MIDSILFDLIEREAKRERENIELIASENFVSLGVRQAVGSILTNKYAEGYPSKRYYGGCFVVDDIENLAISRAKELFGASYANVQPHSGSQANMAAIMALIKPGDKILGMELSHGGHLTHGSKVSFSGMLFDAYSYGVSRDSEIIDYDDVRRIARECRPNLIIAGASSYSREIDFKKFREIADEVSAYLLCDIAHTAGLVVTGFHNSPIDVAHLTTSTTHKTLRGPRGGLILAGKESSMIVNFNNKERTLENAVNSCVFPGTQGGPLMHVIAGKAVAFGEALMDEFKDYISSVIENTKAMAEYFVSEGFRIVSGGTDNHLFLVDLGILGITGADAEKVLESVNIILNKNIIPFDSKNPSVASGIRIGGAAITSRGLNRDDSIEVARFIIRALKTKSDYELKKIKCEVVEFISSFNMP.

(6S)-5,6,7,8-tetrahydrofolate-binding positions include Leu-112 and 116–118 (GHL). Lys-221 is modified (N6-(pyridoxal phosphate)lysine). (6S)-5,6,7,8-tetrahydrofolate is bound at residue Glu-247.

Belongs to the SHMT family. In terms of assembly, homodimer. Requires pyridoxal 5'-phosphate as cofactor.

The protein resides in the cytoplasm. The enzyme catalyses (6R)-5,10-methylene-5,6,7,8-tetrahydrofolate + glycine + H2O = (6S)-5,6,7,8-tetrahydrofolate + L-serine. It functions in the pathway one-carbon metabolism; tetrahydrofolate interconversion. Its pathway is amino-acid biosynthesis; glycine biosynthesis; glycine from L-serine: step 1/1. In terms of biological role, catalyzes the reversible interconversion of serine and glycine with tetrahydrofolate (THF) serving as the one-carbon carrier. This reaction serves as the major source of one-carbon groups required for the biosynthesis of purines, thymidylate, methionine, and other important biomolecules. Also exhibits THF-independent aldolase activity toward beta-hydroxyamino acids, producing glycine and aldehydes, via a retro-aldol mechanism. This Borrelia turicatae (strain 91E135) protein is Serine hydroxymethyltransferase.